We begin with the raw amino-acid sequence, 144 residues long: Protein cornichon homolog 1 (144 aa).

At 1–10 the chain is on the cytoplasmic side; the sequence is MAFTFAAFCY. Residues 11–31 traverse the membrane as a helical segment; the sequence is MLALLLTATLIFFAIWHIIAF. Topologically, residues 32–56 are lumenal; sequence DELKTDYKNPIDQCNTLNPLVLPEY. A helical membrane pass occupies residues 57 to 77; the sequence is LIHAFFCVMFLCAAEWLTLGL. Over 78–122 the chain is Cytoplasmic; it reads NMPLLAYHIWRYMSRPVMSGPGLYDPTTIMNADILAYCQKEGWCK. Residues 123–143 traverse the membrane as a helical segment; sequence LAFYLLAFFYYLYGMIYVLVS. Position 144 (serine 144) is a topological domain, lumenal.

This sequence belongs to the cornichon family. In terms of assembly, interacts with AREG immature precursor and with immature TGFA, i.e. with a prosegment and lacking full N-glycosylation, but not with the fully N-glycosylated form. In the Golgi apparatus, may form a complex with GORASP55 and transmembrane TGFA.

Its subcellular location is the endoplasmic reticulum membrane. The protein localises to the golgi apparatus membrane. Functionally, involved in the selective transport and maturation of TGF-alpha family proteins. The sequence is that of Protein cornichon homolog 1 (CNIH1) from Pongo abelii (Sumatran orangutan).